The primary structure comprises 507 residues: Probable Xaa-Pro aminopeptidase HCBG_01484 (507 aa).

4 residues coordinate Mn(2+): Asp283, Asp294, Glu431, and Glu469.

This sequence belongs to the peptidase M24B family. The cofactor is Mn(2+).

The catalysed reaction is Release of any N-terminal amino acid, including proline, that is linked to proline, even from a dipeptide or tripeptide.. Catalyzes the removal of a penultimate prolyl residue from the N-termini of peptides. The polypeptide is Probable Xaa-Pro aminopeptidase HCBG_01484 (Ajellomyces capsulatus (strain G186AR / H82 / ATCC MYA-2454 / RMSCC 2432) (Darling's disease fungus)).